We begin with the raw amino-acid sequence, 728 residues long: Polyribonucleotide nucleotidyltransferase (728 aa).

2 residues coordinate Mg(2+): Asp488 and Asp494. The KH domain occupies 555–614; it reads PRMITMKIHPDKIREVIGKGGSTIQALTKETGTTIDIQEDGTITIASTSTDGMAEAKRRI. Residues 624 to 692 enclose the S1 motif domain; that stretch reads GKIYNGTVLK…EKGRLRLSLK (69 aa). Residues 702–728 form a disordered region; it reads ISPVNAGEAAPAPAPAAAPATPSDQQQ. Low complexity predominate over residues 710–721; the sequence is AAPAPAPAAAPA.

This sequence belongs to the polyribonucleotide nucleotidyltransferase family. Mg(2+) serves as cofactor.

The protein resides in the cytoplasm. It catalyses the reaction RNA(n+1) + phosphate = RNA(n) + a ribonucleoside 5'-diphosphate. Functionally, involved in mRNA degradation. Catalyzes the phosphorolysis of single-stranded polyribonucleotides processively in the 3'- to 5'-direction. The polypeptide is Polyribonucleotide nucleotidyltransferase (Cupriavidus pinatubonensis (strain JMP 134 / LMG 1197) (Cupriavidus necator (strain JMP 134))).